Reading from the N-terminus, the 295-residue chain is Defective in cullin neddylation protein 1 (295 aa).

The UBA-like domain occupies 8–45; that stretch reads QKTKLRQFVQWTQVTEAVSLNFLAKANWNIEYAMTLYF. Residues 60–272 form the DCUN1 domain; sequence VDRSNIERLF…LIDQFVDYCR (213 aa).

In terms of assembly, interacts with the cullin cul-3. Interacts with ubiquitin via its UBA-like domain. Interacts with ned-8/nedd8.

It is found in the nucleus. Functionally, required for neddylation of cullin components of SCF-type E3 ubiquitin ligase complexes. Neddylation of cullins play an essential role in the regulation of SCF-type complexes activity. Does not act by preventing deneddylation, but rather facilitates neddylation, possibly by acting with rbx-1 to recruit the Nedd8-charged E2 enzyme to the cullin component of SCF-type complexes. This chain is Defective in cullin neddylation protein 1 (dcn-1), found in Caenorhabditis elegans.